The following is a 276-amino-acid chain: NH(3)-dependent NAD(+) synthetase (276 aa).

43–50 (GISGGVDS) serves as a coordination point for ATP. A Mg(2+)-binding site is contributed by D49. Residue R146 coordinates deamido-NAD(+). T166 contacts ATP. E171 lines the Mg(2+) pocket. 2 residues coordinate deamido-NAD(+): K179 and D186. ATP is bound by residues K195 and T217. 266–267 (HK) contributes to the deamido-NAD(+) binding site.

This sequence belongs to the NAD synthetase family. As to quaternary structure, homodimer.

The enzyme catalyses deamido-NAD(+) + NH4(+) + ATP = AMP + diphosphate + NAD(+) + H(+). It functions in the pathway cofactor biosynthesis; NAD(+) biosynthesis; NAD(+) from deamido-NAD(+) (ammonia route): step 1/1. Catalyzes the ATP-dependent amidation of deamido-NAD to form NAD. Uses ammonia as a nitrogen source. This Aliivibrio salmonicida (strain LFI1238) (Vibrio salmonicida (strain LFI1238)) protein is NH(3)-dependent NAD(+) synthetase.